The chain runs to 287 residues: 3-hydroxyanthranilate 3,4-dioxygenase (287 aa).

Positions 1-163 are domain A (catalytic); the sequence is MTNQSLHVNI…SKENETGKPD (163 aa). An O2-binding site is contributed by Arg46. Fe cation is bound by residues His50, Glu56, and His94. Glu56 is a substrate binding site. Positions 98 and 108 each coordinate substrate. The linker stretch occupies residues 164–180; it reads PANPIKPAPYPLNTMNV. Residues 181 to 287 form a domain B region; it reads MTPFSFREWV…AQDPDRKRPY (107 aa).

The protein belongs to the 3-HAO family. As to quaternary structure, monomer. Fe(2+) is required as a cofactor.

It is found in the cytoplasm. It localises to the cytosol. The enzyme catalyses 3-hydroxyanthranilate + O2 = (2Z,4Z)-2-amino-3-carboxymuconate 6-semialdehyde. It functions in the pathway cofactor biosynthesis; NAD(+) biosynthesis; quinolinate from L-kynurenine: step 3/3. In terms of biological role, catalyzes the oxidative ring opening of 3-hydroxyanthranilate to 2-amino-3-carboxymuconate semialdehyde, which spontaneously cyclizes to quinolinate. The chain is 3-hydroxyanthranilate 3,4-dioxygenase (haao) from Danio rerio (Zebrafish).